A 211-amino-acid chain; its full sequence is Thiamine-phosphate synthase (211 aa).

4-amino-2-methyl-5-(diphosphooxymethyl)pyrimidine is bound by residues 37-41 and Asn-69; that span reads QLRIK. Asp-70 and Asp-89 together coordinate Mg(2+). Ser-108 is a binding site for 4-amino-2-methyl-5-(diphosphooxymethyl)pyrimidine. 134–136 is a binding site for 2-[(2R,5Z)-2-carboxy-4-methylthiazol-5(2H)-ylidene]ethyl phosphate; sequence TQT. Residue Lys-137 participates in 4-amino-2-methyl-5-(diphosphooxymethyl)pyrimidine binding. 2-[(2R,5Z)-2-carboxy-4-methylthiazol-5(2H)-ylidene]ethyl phosphate contacts are provided by residues Gly-166 and 186–187; that span reads VS.

The protein belongs to the thiamine-phosphate synthase family. It depends on Mg(2+) as a cofactor.

It carries out the reaction 2-[(2R,5Z)-2-carboxy-4-methylthiazol-5(2H)-ylidene]ethyl phosphate + 4-amino-2-methyl-5-(diphosphooxymethyl)pyrimidine + 2 H(+) = thiamine phosphate + CO2 + diphosphate. The enzyme catalyses 2-(2-carboxy-4-methylthiazol-5-yl)ethyl phosphate + 4-amino-2-methyl-5-(diphosphooxymethyl)pyrimidine + 2 H(+) = thiamine phosphate + CO2 + diphosphate. It catalyses the reaction 4-methyl-5-(2-phosphooxyethyl)-thiazole + 4-amino-2-methyl-5-(diphosphooxymethyl)pyrimidine + H(+) = thiamine phosphate + diphosphate. It participates in cofactor biosynthesis; thiamine diphosphate biosynthesis; thiamine phosphate from 4-amino-2-methyl-5-diphosphomethylpyrimidine and 4-methyl-5-(2-phosphoethyl)-thiazole: step 1/1. Functionally, condenses 4-methyl-5-(beta-hydroxyethyl)thiazole monophosphate (THZ-P) and 2-methyl-4-amino-5-hydroxymethyl pyrimidine pyrophosphate (HMP-PP) to form thiamine monophosphate (TMP). In Enterobacter sp. (strain 638), this protein is Thiamine-phosphate synthase.